A 454-amino-acid chain; its full sequence is Bifunctional protein GlmU (454 aa).

The tract at residues 1 to 229 (MQRYAVVLAA…FDEIMGVNDR (229 aa)) is pyrophosphorylase. UDP-N-acetyl-alpha-D-glucosamine is bound by residues 8–11 (LAAG), Lys-22, Gln-72, and 77–78 (GT). Mg(2+) is bound at residue Asp-102. UDP-N-acetyl-alpha-D-glucosamine is bound by residues Gly-139, Glu-154, and Asn-227. Mg(2+) is bound at residue Asn-227. A linker region spans residues 230–250 (VALSKAEQAMRQRINEYHMRN). Positions 251 to 454 (GVTLIDPSST…KPGYLNKNKE (204 aa)) are N-acetyltransferase. Residues Arg-332 and Lys-350 each contribute to the UDP-N-acetyl-alpha-D-glucosamine site. The Proton acceptor role is filled by His-362. UDP-N-acetyl-alpha-D-glucosamine-binding residues include Tyr-365 and Asn-376. Residues 385–386 (NY), Ala-422, and Arg-439 contribute to the acetyl-CoA site.

This sequence in the N-terminal section; belongs to the N-acetylglucosamine-1-phosphate uridyltransferase family. In the C-terminal section; belongs to the transferase hexapeptide repeat family. Homotrimer. Mg(2+) is required as a cofactor.

Its subcellular location is the cytoplasm. The enzyme catalyses alpha-D-glucosamine 1-phosphate + acetyl-CoA = N-acetyl-alpha-D-glucosamine 1-phosphate + CoA + H(+). The catalysed reaction is N-acetyl-alpha-D-glucosamine 1-phosphate + UTP + H(+) = UDP-N-acetyl-alpha-D-glucosamine + diphosphate. It participates in nucleotide-sugar biosynthesis; UDP-N-acetyl-alpha-D-glucosamine biosynthesis; N-acetyl-alpha-D-glucosamine 1-phosphate from alpha-D-glucosamine 6-phosphate (route II): step 2/2. The protein operates within nucleotide-sugar biosynthesis; UDP-N-acetyl-alpha-D-glucosamine biosynthesis; UDP-N-acetyl-alpha-D-glucosamine from N-acetyl-alpha-D-glucosamine 1-phosphate: step 1/1. Its pathway is bacterial outer membrane biogenesis; LPS lipid A biosynthesis. Functionally, catalyzes the last two sequential reactions in the de novo biosynthetic pathway for UDP-N-acetylglucosamine (UDP-GlcNAc). The C-terminal domain catalyzes the transfer of acetyl group from acetyl coenzyme A to glucosamine-1-phosphate (GlcN-1-P) to produce N-acetylglucosamine-1-phosphate (GlcNAc-1-P), which is converted into UDP-GlcNAc by the transfer of uridine 5-monophosphate (from uridine 5-triphosphate), a reaction catalyzed by the N-terminal domain. In Staphylococcus carnosus (strain TM300), this protein is Bifunctional protein GlmU.